The primary structure comprises 161 residues: Regulator of ribonuclease activity A (161 aa).

This sequence belongs to the RraA family. As to quaternary structure, homotrimer. Binds to both RNA-binding sites in the C-terminal region of Rne and to RhlB.

The protein resides in the cytoplasm. In terms of biological role, globally modulates RNA abundance by binding to RNase E (Rne) and regulating its endonucleolytic activity. Can modulate Rne action in a substrate-dependent manner by altering the composition of the degradosome. Modulates RNA-binding and helicase activities of the degradosome. The sequence is that of Regulator of ribonuclease activity A from Edwardsiella ictaluri (strain 93-146).